A 101-amino-acid chain; its full sequence is Acylphosphatase (101 aa).

Residues 11 to 99 (SWLVKAIGRV…PRLNRFDRLP (89 aa)) form the Acylphosphatase-like domain. Catalysis depends on residues Arg26 and Asn44.

It belongs to the acylphosphatase family.

It catalyses the reaction an acyl phosphate + H2O = a carboxylate + phosphate + H(+). The sequence is that of Acylphosphatase (acyP) from Polaromonas naphthalenivorans (strain CJ2).